The sequence spans 87 residues: Retinal rod rhodopsin-sensitive cGMP 3',5'-cyclic phosphodiesterase subunit gamma (87 aa).

M1 is subject to N-acetylmethionine. Positions 16 to 54 are disordered; that stretch reads VVGGPVTPRKGPPKFKQRQTRQFKSKPPKKGVQGFGDDI. Over residues 26–44 the composition is skewed to basic residues; the sequence is GPPKFKQRQTRQFKSKPPK.

The protein belongs to the rod/cone cGMP-PDE gamma subunit family. Oligomer composed of two catalytic chains (alpha and beta), an inhibitory chain (gamma) and the delta chain.

The catalysed reaction is 3',5'-cyclic GMP + H2O = GMP + H(+). Participates in processes of transmission and amplification of the visual signal. cGMP-PDEs are the effector molecules in G-protein-mediated phototransduction in vertebrate rods and cones. This Cavia porcellus (Guinea pig) protein is Retinal rod rhodopsin-sensitive cGMP 3',5'-cyclic phosphodiesterase subunit gamma (PDE6G).